A 397-amino-acid polypeptide reads, in one-letter code: L-rhamnonate dehydratase (397 aa).

Residues histidine 25 and arginine 51 each coordinate substrate. Positions 217, 243, and 271 each coordinate Mg(2+). Histidine 321 acts as the Proton acceptor in catalysis. Glutamate 341 is a substrate binding site.

It belongs to the mandelate racemase/muconate lactonizing enzyme family. RhamD subfamily. Homooctamer; tetramer of dimers. It depends on Mg(2+) as a cofactor.

It carries out the reaction L-rhamnonate = 2-dehydro-3-deoxy-L-rhamnonate + H2O. Its pathway is carbohydrate degradation; L-rhamnose degradation. In terms of biological role, catalyzes the dehydration of L-rhamnonate to 2-keto-3-deoxy-L-rhamnonate (KDR). Also shows activity with L-lyxonate and L-mannonate, with much lower catalytic efficiency. Catalyzes the third step in an alternative pathway for rhamnose utilization that does not involve phosphorylated intermediates. In Sphingomonas sp. (strain SKA58), this protein is L-rhamnonate dehydratase.